A 108-amino-acid polypeptide reads, in one-letter code: MERDKGVAPIVVENVAYNEQVVSFVRNLTSSFFGCAAGILGLTSYEGLALYVLGYFFVSFLLFALKMRGNLTKYYQPGYKFWIAKILDGAPSYVLTWTLFYSLVYVYE.

3 helical membrane-spanning segments follow: residues 21 to 41, 45 to 65, and 86 to 106; these read VVSF…GILG, YEGL…LFAL, and ILDG…LVYV.

It belongs to the EMC6 family.

Its subcellular location is the endoplasmic reticulum membrane. This Schizosaccharomyces pombe (strain 972 / ATCC 24843) (Fission yeast) protein is ER membrane protein complex subunit 6.